Consider the following 173-residue polypeptide: Archaemetzincin (173 aa).

Histidine 130 provides a ligand contact to Zn(2+). The Proton acceptor role is filled by glutamate 131. Zn(2+)-binding residues include histidine 134, histidine 140, cysteine 141, cysteine 146, cysteine 165, and cysteine 168.

This sequence belongs to the peptidase M54 family. Monomer. Zn(2+) serves as cofactor.

In terms of biological role, probable zinc metalloprotease whose natural substrate is unknown. The sequence is that of Archaemetzincin from Natronomonas pharaonis (strain ATCC 35678 / DSM 2160 / CIP 103997 / JCM 8858 / NBRC 14720 / NCIMB 2260 / Gabara) (Halobacterium pharaonis).